Consider the following 441-residue polypeptide: Tol-Pal system protein TolB (441 aa).

The N-terminal stretch at 1–39 is a signal peptide; sequence MPAMTPAFRRADLTGFLRTYGAALILLLAAMLAWQPAQA.

It belongs to the TolB family. As to quaternary structure, the Tol-Pal system is composed of five core proteins: the inner membrane proteins TolA, TolQ and TolR, the periplasmic protein TolB and the outer membrane protein Pal. They form a network linking the inner and outer membranes and the peptidoglycan layer.

It localises to the periplasm. In terms of biological role, part of the Tol-Pal system, which plays a role in outer membrane invagination during cell division and is important for maintaining outer membrane integrity. The sequence is that of Tol-Pal system protein TolB from Bordetella bronchiseptica (strain ATCC BAA-588 / NCTC 13252 / RB50) (Alcaligenes bronchisepticus).